Consider the following 242-residue polypeptide: DNA repair protein RecO (242 aa).

This sequence belongs to the RecO family. Monomer.

In terms of biological role, involved in DNA repair and RecF pathway recombination. This is DNA repair protein RecO from Shigella flexneri serotype 5b (strain 8401).